Here is a 561-residue protein sequence, read N- to C-terminus: Dihydroxy-acid dehydratase (561 aa).

Residue Cys50 coordinates [2Fe-2S] cluster. Asp82 is a binding site for Mg(2+). A [2Fe-2S] cluster-binding site is contributed by Cys123. 2 residues coordinate Mg(2+): Asp124 and Lys125. The residue at position 125 (Lys125) is an N6-carboxylysine. Cys195 is a binding site for [2Fe-2S] cluster. Glu447 is a Mg(2+) binding site. Ser473 acts as the Proton acceptor in catalysis.

This sequence belongs to the IlvD/Edd family. Homodimer. The cofactor is [2Fe-2S] cluster. Requires Mg(2+) as cofactor.

It catalyses the reaction (2R)-2,3-dihydroxy-3-methylbutanoate = 3-methyl-2-oxobutanoate + H2O. It carries out the reaction (2R,3R)-2,3-dihydroxy-3-methylpentanoate = (S)-3-methyl-2-oxopentanoate + H2O. Its pathway is amino-acid biosynthesis; L-isoleucine biosynthesis; L-isoleucine from 2-oxobutanoate: step 3/4. It functions in the pathway amino-acid biosynthesis; L-valine biosynthesis; L-valine from pyruvate: step 3/4. Its function is as follows. Functions in the biosynthesis of branched-chain amino acids. Catalyzes the dehydration of (2R,3R)-2,3-dihydroxy-3-methylpentanoate (2,3-dihydroxy-3-methylvalerate) into 2-oxo-3-methylpentanoate (2-oxo-3-methylvalerate) and of (2R)-2,3-dihydroxy-3-methylbutanoate (2,3-dihydroxyisovalerate) into 2-oxo-3-methylbutanoate (2-oxoisovalerate), the penultimate precursor to L-isoleucine and L-valine, respectively. This Synechocystis sp. (strain ATCC 27184 / PCC 6803 / Kazusa) protein is Dihydroxy-acid dehydratase.